The following is a 146-amino-acid chain: Large ribosomal subunit protein uL16 (146 aa).

It belongs to the universal ribosomal protein uL16 family. As to quaternary structure, part of the 50S ribosomal subunit.

Functionally, binds 23S rRNA and is also seen to make contacts with the A and possibly P site tRNAs. This is Large ribosomal subunit protein uL16 from Lactobacillus helveticus (strain DPC 4571).